Reading from the N-terminus, the 530-residue chain is Tyrosinase (530 aa).

An N-terminal signal peptide occupies residues 1–18; that stretch reads MLLAALCCLLWSFRTSTG. The Lumenal, melanosome portion of the chain corresponds to 19 to 473; it reads HFPRACASSK…IKPYLEQASR (455 aa). N-linked (GlcNAc...) asparagine glycans are attached at residues N86, N111, and N161. Residues H180, H202, and H211 each contribute to the Cu cation site. Residues N230 and N337 are each glycosylated (N-linked (GlcNAc...) asparagine). Cu cation-binding residues include H363 and H367. The N-linked (GlcNAc...) asparagine glycan is linked to N371. H390 contacts Cu cation. The chain crosses the membrane as a helical span at residues 474–494; that stretch reads IWPWLIGAAVVGCVVTAVLGG. At 495-530 the chain is on the cytoplasmic side; the sequence is LTSLLCRRNRKQLHEEKQPLLMEKEDYHSLLYQTHL.

This sequence belongs to the tyrosinase family. Forms an OPN3-dependent complex with DCT in response to blue light in melanocytes. The cofactor is Cu(2+). In terms of processing, glycosylated.

It localises to the melanosome membrane. The protein resides in the melanosome. It catalyses the reaction 2 L-dopa + O2 = 2 L-dopaquinone + 2 H2O. It carries out the reaction L-tyrosine + O2 = L-dopaquinone + H2O. The enzyme catalyses 2 5,6-dihydroxyindole-2-carboxylate + O2 = 2 indole-5,6-quinone-2-carboxylate + 2 H2O. Its function is as follows. This is a copper-containing oxidase that functions in the formation of pigments such as melanins and other polyphenolic compounds. Catalyzes the initial and rate limiting step in the cascade of reactions leading to melanin production from tyrosine. In addition to hydroxylating tyrosine to DOPA (3,4-dihydroxyphenylalanine), also catalyzes the oxidation of DOPA to DOPA-quinone, and possibly the oxidation of DHI (5,6-dihydroxyindole) to indole-5,6 quinone. This Canis lupus familiaris (Dog) protein is Tyrosinase (TYR).